Consider the following 180-residue polypeptide: MSAVALEKEPLRIPSSQDFAAFVTRSEVEDLLYHEAELLDTWHLHDWLALFTEDCSYFVPSTDLPRTASADDSLFYIADDAVRLRERVIRLMKKTAHAEYPRSRTRHLVSNIRILAANAEEIQVASAFVTYRMKLGNSDAYVGSTHYRLRRIDGQLRIVEKRCFLDLEALRPHGRVSIIL.

The protein belongs to the bacterial ring-hydroxylating dioxygenase beta subunit family. The p-cumate 2,3-dioxygenase multicomponent enzyme system is composed of an electron transfer component and a dioxygenase component (iron sulfur protein (ISP)). The electron transfer component is composed of a ferredoxin reductase (CmtAa) and a ferredoxin (CmtAd), and the dioxygenase component is formed of a large alpha subunit (CmtAb) and a small beta subunit (CmtAc).

It participates in aromatic compound metabolism; p-cumate degradation; acetaldehyde and pyruvate from p-cumate. Its function is as follows. Component of the p-cumate 2,3-dioxygenase multicomponent enzyme system which catalyzes the incorporation of both atoms of molecular oxygen into p-cumate to form cis-2,3-dihydroxy-2,3-dihydro-p-cumate. The beta subunit seems to have a structural role in the holoenzyme. Also able to catalyze the cis-dihydroxylation of indole-2-carboxylate and indole-3-carboxylate. The chain is p-cumate 2,3-dioxygenase system, small oxygenase component from Pseudomonas putida (Arthrobacter siderocapsulatus).